Consider the following 642-residue polypeptide: Threonine--tRNA ligase (642 aa).

In terms of domain architecture, TGS spans 1–61 (MPVITLPDGS…ENDAQLSIIT (61 aa)). Positions 243–534 (DHRKIGKQLD…LTEEFAGFFP (292 aa)) are catalytic. An N6-acetyllysine modification is found at lysine 286. Zn(2+) is bound by residues cysteine 334, histidine 385, and histidine 511.

This sequence belongs to the class-II aminoacyl-tRNA synthetase family. In terms of assembly, homodimer. Zn(2+) is required as a cofactor.

It is found in the cytoplasm. It carries out the reaction tRNA(Thr) + L-threonine + ATP = L-threonyl-tRNA(Thr) + AMP + diphosphate + H(+). In terms of biological role, catalyzes the attachment of threonine to tRNA(Thr) in a two-step reaction: L-threonine is first activated by ATP to form Thr-AMP and then transferred to the acceptor end of tRNA(Thr). Also edits incorrectly charged L-seryl-tRNA(Thr). The sequence is that of Threonine--tRNA ligase from Shigella flexneri serotype 5b (strain 8401).